The following is a 600-amino-acid chain: Zinc metalloproteinase-disintegrin-like stejnihagin-B (600 aa).

The first 20 residues, 1 to 20, serve as a signal peptide directing secretion; it reads MIEVLLVTICLAVFPYQGSS. Positions 21 to 191 are excised as a propeptide; sequence IILESGNVND…KASQLVVTAE (171 aa). A Pyrrolidone carboxylic acid modification is found at Gln192. One can recognise a Peptidase M12B domain in the interval 198–389; it reads RYVKLAIVAD…YNPQCILNAL (192 aa). N-linked (GlcNAc...) asparagine glycans are attached at residues Asn261 and Asn317. 3 disulfides stabilise this stretch: Cys306-Cys384, Cys346-Cys368, and Cys348-Cys351. His331 is a Zn(2+) binding site. Glu332 is a catalytic residue. The Zn(2+) site is built by His335 and His341. One can recognise a Disintegrin domain in the interval 397 to 483; sequence PPVCGNELLE…DCPTDSFHRN (87 aa). Val399, Asn402, Leu404, Glu406, Glu409, and Asp412 together coordinate Ca(2+). 14 disulfide bridges follow: Cys400-Cys429, Cys411-Cys424, Cys413-Cys419, Cys423-Cys446, Cys437-Cys443, Cys442-Cys468, Cys455-Cys475, Cys462-Cys494, Cys487-Cys499, Cys506-Cys556, Cys521-Cys565, Cys534-Cys544, Cys551-Cys587, and Cys581-Cys593. Asn425 is a glycosylation site (N-linked (GlcNAc...) asparagine). A D/ECD-tripeptide motif is present at residues 461–463; the sequence is ECD. N-linked (GlcNAc...) asparagine glycosylation is present at Asn467. Asn513 is a glycosylation site (N-linked (GlcNAc...) asparagine).

The protein belongs to the venom metalloproteinase (M12B) family. P-III subfamily. P-IIIa sub-subfamily. Monomer. It depends on Zn(2+) as a cofactor. Expressed by the venom gland.

It localises to the secreted. Functionally, this metalloproteinase-disintegrin-like impairs hemostasis in the envenomed animal. This chain is Zinc metalloproteinase-disintegrin-like stejnihagin-B, found in Trimeresurus stejnegeri (Chinese green tree viper).